Here is a 203-residue protein sequence, read N- to C-terminus: DNA-directed RNA polymerase subunit gamma (203 aa).

Zn(2+) is bound by residues cysteine 34, cysteine 36, cysteine 49, and cysteine 52.

Belongs to the RNA polymerase beta' chain family. RpoC1 subfamily. In terms of assembly, in cyanobacteria the RNAP catalytic core is composed of 2 alpha, 1 beta, 1 beta', 1 gamma and 1 omega subunit. When a sigma factor is associated with the core the holoenzyme is formed, which can initiate transcription. Requires Zn(2+) as cofactor.

It carries out the reaction RNA(n) + a ribonucleoside 5'-triphosphate = RNA(n+1) + diphosphate. Functionally, DNA-dependent RNA polymerase catalyzes the transcription of DNA into RNA using the four ribonucleoside triphosphates as substrates. The sequence is that of DNA-directed RNA polymerase subunit gamma (rpoC1) from Prochlorothrix hollandica.